Here is a 359-residue protein sequence, read N- to C-terminus: 5-amino-6-(D-ribitylamino)uracil--L-tyrosine 4-hydroxyphenyl transferase (359 aa).

In terms of domain architecture, Radical SAM core spans 45-282; sequence VTYVLNANIN…VYAISRIFFK (238 aa). C59, C63, and C66 together coordinate [4Fe-4S] cluster.

The protein belongs to the radical SAM superfamily. CofH family. Consists of two subunits, CofG and CofH. It depends on [4Fe-4S] cluster as a cofactor.

The catalysed reaction is 5-amino-6-(D-ribitylamino)uracil + L-tyrosine + S-adenosyl-L-methionine = 5-amino-5-(4-hydroxybenzyl)-6-(D-ribitylimino)-5,6-dihydrouracil + 2-iminoacetate + 5'-deoxyadenosine + L-methionine + H(+). It participates in cofactor biosynthesis; coenzyme F0 biosynthesis. Functionally, catalyzes the radical-mediated synthesis of 5-amino-5-(4-hydroxybenzyl)-6-(D-ribitylimino)-5,6-dihydrouracil from 5-amino-6-(D-ribitylamino)uracil and L-tyrosine. The polypeptide is 5-amino-6-(D-ribitylamino)uracil--L-tyrosine 4-hydroxyphenyl transferase (Methanococcus vannielii (strain ATCC 35089 / DSM 1224 / JCM 13029 / OCM 148 / SB)).